A 314-amino-acid polypeptide reads, in one-letter code: Cytochrome f (314 aa).

An N-terminal signal peptide occupies residues 1-30 (MATNKFFKSLLFALTIAINSFGFCIQDAVA). Heme-binding residues include Y31, C51, C54, and H55. A helical membrane pass occupies residues 280–300 (IYGYLAFCFSVLITQIMLVLK).

Belongs to the cytochrome f family. The 4 large subunits of the cytochrome b6-f complex are cytochrome b6, subunit IV (17 kDa polypeptide, petD), cytochrome f and the Rieske protein, while the 4 small subunits are PetG, PetL, PetM and PetN. The complex functions as a dimer. Heme is required as a cofactor.

The protein localises to the plastid. It localises to the chloroplast thylakoid membrane. Component of the cytochrome b6-f complex, which mediates electron transfer between photosystem II (PSII) and photosystem I (PSI), cyclic electron flow around PSI, and state transitions. This is Cytochrome f from Phaeodactylum tricornutum (strain CCAP 1055/1).